Reading from the N-terminus, the 360-residue chain is Nucleoporin SEH1-B (360 aa).

WD repeat units lie at residues 10-49 (DHKD…NWHC), 55-96 (THSG…SNDK), 111-152 (DSRT…NLSQ), 160-210 (SCKL…RKYA), 217-258 (SVSD…KELS), and 276-315 (NHNS…NWKC).

The protein belongs to the WD repeat SEC13 family. Component of the Nup107-160 subcomplex of the nuclear pore complex (NPC). The Nup107-160 subcomplex includes NUP160, NUP133, NUP107, NUP98, NUP85, NUP43, NUP37, SEH1 and SEC13. Component of the GATOR2 subcomplex, composed of MIOS, SEC13, SEH1L, WDR24 and WDR59. The GATOR2 complex interacts with CASTOR1 and CASTOR2; the interaction is negatively regulated by arginine. The GATOR2 complex interacts with SESN1, SESN2 and SESN3; the interaction is negatively regulated by amino acids.

Its subcellular location is the chromosome. The protein localises to the centromere. It localises to the kinetochore. It is found in the nucleus. The protein resides in the nuclear pore complex. Its subcellular location is the lysosome membrane. Its activity is regulated as follows. The GATOR2 complex is negatively regulated by the upstream amino acid sensors CASTOR1 and SESN2, which sequester the GATOR2 complex in absence of amino acids. In the presence of abundant amino acids, GATOR2 is released from CASTOR1 and SESN2 and activated. Functionally, component of the Nup107-160 subcomplex of the nuclear pore complex (NPC). The Nup107-160 subcomplex is required for the assembly of a functional NPC. The Nup107-160 subcomplex is also required for normal kinetochore microtubule attachment, mitotic progression and chromosome segregation. This subunit plays a role in recruitment of the Nup107-160 subcomplex to the kinetochore. As a component of the GATOR2 complex, functions as an activator of the amino acid-sensing branch of the mTORC1 signaling pathway. The GATOR2 complex indirectly activates mTORC1 through the inhibition of the GATOR1 subcomplex. GATOR2 probably acts as an E3 ubiquitin-protein ligase toward GATOR1. In the presence of abundant amino acids, the GATOR2 complex mediates ubiquitination of the NPRL2 core component of the GATOR1 complex, leading to GATOR1 inactivation. In the absence of amino acids, GATOR2 is inhibited, activating the GATOR1 complex. The sequence is that of Nucleoporin SEH1-B (seh1l-b) from Xenopus laevis (African clawed frog).